The primary structure comprises 666 residues: tRNA 5-methylaminomethyl-2-thiouridine biosynthesis bifunctional protein MnmC (666 aa).

Residues 1-253 (MSSPFVPIIT…KRHMICAHYE (253 aa)) form a tRNA (mnm(5)s(2)U34)-methyltransferase region. The tract at residues 283-666 (VGGGLAGCFI…FLRKKIIQGP (384 aa)) is FAD-dependent cmnm(5)s(2)U34 oxidoreductase.

In the N-terminal section; belongs to the methyltransferase superfamily. tRNA (mnm(5)s(2)U34)-methyltransferase family. This sequence in the C-terminal section; belongs to the DAO family. It depends on FAD as a cofactor.

It is found in the cytoplasm. The enzyme catalyses 5-aminomethyl-2-thiouridine(34) in tRNA + S-adenosyl-L-methionine = 5-methylaminomethyl-2-thiouridine(34) in tRNA + S-adenosyl-L-homocysteine + H(+). Its function is as follows. Catalyzes the last two steps in the biosynthesis of 5-methylaminomethyl-2-thiouridine (mnm(5)s(2)U) at the wobble position (U34) in tRNA. Catalyzes the FAD-dependent demodification of cmnm(5)s(2)U34 to nm(5)s(2)U34, followed by the transfer of a methyl group from S-adenosyl-L-methionine to nm(5)s(2)U34, to form mnm(5)s(2)U34. The polypeptide is tRNA 5-methylaminomethyl-2-thiouridine biosynthesis bifunctional protein MnmC (Legionella pneumophila (strain Lens)).